The chain runs to 317 residues: Ribosomal protein L11 methyltransferase (317 aa).

Positions 158, 179, 201, and 244 each coordinate S-adenosyl-L-methionine.

This sequence belongs to the methyltransferase superfamily. PrmA family.

Its subcellular location is the cytoplasm. The enzyme catalyses L-lysyl-[protein] + 3 S-adenosyl-L-methionine = N(6),N(6),N(6)-trimethyl-L-lysyl-[protein] + 3 S-adenosyl-L-homocysteine + 3 H(+). Its function is as follows. Methylates ribosomal protein L11. The polypeptide is Ribosomal protein L11 methyltransferase (Lactococcus lactis subsp. cremoris (strain SK11)).